Consider the following 136-residue polypeptide: Transmembrane protein 203 (136 aa).

Residues 1–51 form an interaction with STING1 region; sequence MLFSLRELVQWLGFATFEIFVHLLALLVFSVLLALRVDGLVPGLSWWNVFV. 4 helical membrane passes run 14–34, 50–72, 81–101, and 112–132; these read FATF…VLLA, FVPF…VRLF, VLRL…EMLL, and LWFG…MIRA. The interval 52 to 136 is required for the lysosomal localization of the STING-TMEM203 complex; that stretch reads PFFAADGLST…LLMIRACRVN (85 aa).

As to quaternary structure, homodimer. Interacts with ATP2A2, ITPR3 and STIM1. Interacts with STING1 (via transmembrane domain). In terms of tissue distribution, increased expression seen in T-lymphocytes from patients with systemic lupus erythematosus (SLE).

It localises to the endoplasmic reticulum membrane. The protein localises to the endoplasmic reticulum-Golgi intermediate compartment. The protein resides in the lysosome membrane. Functionally, involved in the regulation of cellular calcium homeotasis. Required for spermatogenesis. Acts as a regulator of STING-mediated inflammatory signaling in macrophages. Forms a complex with STING, promoting the activity of TBK1 kinase and the transcription factor IRF3, leading to activation of type I interferon expression. This Homo sapiens (Human) protein is Transmembrane protein 203 (TMEM203).